Reading from the N-terminus, the 103-residue chain is Signal recognition particle 19 kDa protein (103 aa).

It belongs to the SRP19 family. Part of the signal recognition particle protein translocation system, which is composed of SRP and FtsY. Archaeal SRP consists of a 7S RNA molecule of 300 nucleotides and two protein subunits: SRP54 and SRP19.

The protein localises to the cytoplasm. Its function is as follows. Involved in targeting and insertion of nascent membrane proteins into the cytoplasmic membrane. Binds directly to 7S RNA and mediates binding of the 54 kDa subunit of the SRP. The polypeptide is Signal recognition particle 19 kDa protein (Methanopyrus kandleri (strain AV19 / DSM 6324 / JCM 9639 / NBRC 100938)).